A 232-amino-acid chain; its full sequence is 2-C-methyl-D-erythritol 4-phosphate cytidylyltransferase (232 aa).

It belongs to the IspD/TarI cytidylyltransferase family. IspD subfamily.

It catalyses the reaction 2-C-methyl-D-erythritol 4-phosphate + CTP + H(+) = 4-CDP-2-C-methyl-D-erythritol + diphosphate. It functions in the pathway isoprenoid biosynthesis; isopentenyl diphosphate biosynthesis via DXP pathway; isopentenyl diphosphate from 1-deoxy-D-xylulose 5-phosphate: step 2/6. In terms of biological role, catalyzes the formation of 4-diphosphocytidyl-2-C-methyl-D-erythritol from CTP and 2-C-methyl-D-erythritol 4-phosphate (MEP). The polypeptide is 2-C-methyl-D-erythritol 4-phosphate cytidylyltransferase (Vibrio cholerae serotype O1 (strain ATCC 39315 / El Tor Inaba N16961)).